The following is a 157-amino-acid chain: 2-C-methyl-D-erythritol 2,4-cyclodiphosphate synthase (157 aa).

2 residues coordinate a divalent metal cation: Asp8 and His10. 4-CDP-2-C-methyl-D-erythritol 2-phosphate is bound by residues 8–10 and 34–35; these read DVH and HS. A divalent metal cation is bound at residue His42. Residues 56–58, 61–65, 132–135, and Phe139 contribute to the 4-CDP-2-C-methyl-D-erythritol 2-phosphate site; these read DIG, FPDTD, and TTEE.

The protein belongs to the IspF family. As to quaternary structure, homotrimer. It depends on a divalent metal cation as a cofactor.

It carries out the reaction 4-CDP-2-C-methyl-D-erythritol 2-phosphate = 2-C-methyl-D-erythritol 2,4-cyclic diphosphate + CMP. The protein operates within isoprenoid biosynthesis; isopentenyl diphosphate biosynthesis via DXP pathway; isopentenyl diphosphate from 1-deoxy-D-xylulose 5-phosphate: step 4/6. Involved in the biosynthesis of isopentenyl diphosphate (IPP) and dimethylallyl diphosphate (DMAPP), two major building blocks of isoprenoid compounds. Catalyzes the conversion of 4-diphosphocytidyl-2-C-methyl-D-erythritol 2-phosphate (CDP-ME2P) to 2-C-methyl-D-erythritol 2,4-cyclodiphosphate (ME-CPP) with a corresponding release of cytidine 5-monophosphate (CMP). In Clostridium botulinum (strain Alaska E43 / Type E3), this protein is 2-C-methyl-D-erythritol 2,4-cyclodiphosphate synthase.